The sequence spans 202 residues: Superoxide dismutase [Fe] (202 aa).

Residues His30, His78, Asp164, and His168 each contribute to the Fe cation site.

This sequence belongs to the iron/manganese superoxide dismutase family. As to quaternary structure, homotetramer. Fe cation is required as a cofactor.

The catalysed reaction is 2 superoxide + 2 H(+) = H2O2 + O2. Its function is as follows. Destroys superoxide anion radicals which are normally produced within the cells and which are toxic to biological systems. The sequence is that of Superoxide dismutase [Fe] (sod) from Methanothermobacter marburgensis (strain ATCC BAA-927 / DSM 2133 / JCM 14651 / NBRC 100331 / OCM 82 / Marburg) (Methanobacterium thermoautotrophicum).